Consider the following 190-residue polypeptide: dCTP deaminase, dUMP-forming (190 aa).

DCTP is bound by residues 101–106, Asp119, 127–129, Gln148, Tyr162, and Gln174; these read KSSLGR and TLE. The active-site Proton donor/acceptor is the Glu129. Residues 161-190 form a disordered region; the sequence is PYGSSGVGSKYQGQRGPTPSRSYQNFIRST. A compositionally biased stretch (polar residues) spans 171-190; it reads YQGQRGPTPSRSYQNFIRST.

This sequence belongs to the dCTP deaminase family. In terms of assembly, homotrimer.

It carries out the reaction dCTP + 2 H2O = dUMP + NH4(+) + diphosphate. It participates in pyrimidine metabolism; dUMP biosynthesis; dUMP from dCTP: step 1/1. In terms of biological role, bifunctional enzyme that catalyzes both the deamination of dCTP to dUTP and the hydrolysis of dUTP to dUMP without releasing the toxic dUTP intermediate. The chain is dCTP deaminase, dUMP-forming from Mycobacterium ulcerans (strain Agy99).